Here is a 954-residue protein sequence, read N- to C-terminus: Glycine dehydrogenase (decarboxylating) (954 aa).

Lysine 704 bears the N6-(pyridoxal phosphate)lysine mark.

Belongs to the GcvP family. As to quaternary structure, the glycine cleavage system is composed of four proteins: P, T, L and H. The cofactor is pyridoxal 5'-phosphate.

The catalysed reaction is N(6)-[(R)-lipoyl]-L-lysyl-[glycine-cleavage complex H protein] + glycine + H(+) = N(6)-[(R)-S(8)-aminomethyldihydrolipoyl]-L-lysyl-[glycine-cleavage complex H protein] + CO2. Its function is as follows. The glycine cleavage system catalyzes the degradation of glycine. The P protein binds the alpha-amino group of glycine through its pyridoxal phosphate cofactor; CO(2) is released and the remaining methylamine moiety is then transferred to the lipoamide cofactor of the H protein. This is Glycine dehydrogenase (decarboxylating) from Vibrio cholerae serotype O1 (strain ATCC 39541 / Classical Ogawa 395 / O395).